The sequence spans 446 residues: Delta(8)-fatty-acid desaturase (446 aa).

In terms of domain architecture, Cytochrome b5 heme-binding spans 5-89; the sequence is KKYISVGELE…LEDYLVSEIS (85 aa). Heme is bound by residues H40 and H63. A run of 2 helical transmembrane segments spans residues 112–132 and 136–156; these read VIYCLSFIALLLCGCVYGVLC and LWVHMLSGAMLGMCFIQAAYL. The Histidine box-1 signature appears at 158-162; that stretch reads HDSGH. Helical transmembrane passes span 174-195, 253-273, 282-302, and 309-329; these read FAQVLNGNCLTGISIAWWKWTH, IYLVMIFGRINLYVQTFLLLF, ALNIIGILVYWTWFPYLVSCL, and VLFVLTCFSVTALQHIQFTLN. A Histidine box-2 motif is present at residues 195-199; that stretch reads HNAHH. Positions 372-376 match the Histidine box-3 motif; the sequence is QLEHH.

This sequence belongs to the fatty acid desaturase type 1 family. Requires Fe cation as cofactor. In terms of tissue distribution, expressed only in young leaves.

The protein localises to the membrane. It catalyses the reaction an N-acyl-(4R)-4-hydroxysphinganine + 2 Fe(II)-[cytochrome b5] + O2 + 2 H(+) = a (4R,8E)-4-hydroxysphingenine ceramide + 2 Fe(III)-[cytochrome b5] + 2 H2O. The catalysed reaction is an N-acyl-(4R)-4-hydroxysphinganine + 2 Fe(II)-[cytochrome b5] + O2 + 2 H(+) = a (4R,8Z)-4-hydroxysphing-8-enine ceramide + 2 Fe(III)-[cytochrome b5] + 2 H2O. Plays a major role as delta(8)-fatty-acid desaturase which introduces a double bond at the 8-position in the long-chain base (LCB) of ceramides with or without a hydroxy group at the 4-position. The enzyme produces both the 8E and 8Z isomers (in a 4:1 ratio). This structural modification contributes to the quantitative partitioning of ceramides between the two major sphingolipid classes, glucosylceramides and glycosylinositolphosphoryl ceramides. Sphingolipids are important membrane components involved in environmental stress responses, such as resistance to chilling, and act as cell signaling molecules. The protein is Delta(8)-fatty-acid desaturase (sld1) of Borago officinalis (Bourrache).